The sequence spans 56 residues: Small ribosomal subunit protein uS14 (56 aa).

Zn(2+)-binding residues include Cys-21, Cys-24, Cys-39, and Cys-42.

This sequence belongs to the universal ribosomal protein uS14 family. Component of the 40S small ribosomal subunit. Zn(2+) is required as a cofactor.

It is found in the cytoplasm. It localises to the cytosol. The protein resides in the rough endoplasmic reticulum. This is Small ribosomal subunit protein uS14 (RpS29) from Spodoptera frugiperda (Fall armyworm).